The primary structure comprises 217 residues: Vesicle transport through interaction with t-SNAREs homolog 1A (217 aa).

Residues 1 to 192 are Cytoplasmic-facing; that stretch reads MSSDFEGYEQ…GMLRRIIQNR (192 aa). Coiled coils occupy residues 31–92 and 112–178; these read PDEK…KRSR and ENQR…GKSS. A helical; Anchor for type IV membrane protein transmembrane segment spans residues 193-213; sequence ILLVILGIIVVIAILTAIAFF. The Vesicular portion of the chain corresponds to 214–217; it reads VKGH.

It belongs to the VTI1 family. In terms of assembly, interacts with distinct SNARE complexes that contain either STX5 or STX6. Interacts with NAPA and, to a lesser extent, with NAPG. Identified in a complex containing STX6, STX12, VAMP4 and VTI1A. As to expression, widely expressed.

The protein resides in the golgi apparatus membrane. Its function is as follows. V-SNARE that mediates vesicle transport pathways through interactions with t-SNAREs on the target membrane. These interactions are proposed to mediate aspects of the specificity of vesicle trafficking and to promote fusion of the lipid bilayers. Involved in vesicular transport from the late endosomes to the trans-Golgi network. Along with VAMP7, involved in an non-conventional RAB1-dependent traffic route to the cell surface used by KCNIP1 and KCND2. May be concerned with increased secretion of cytokines associated with cellular senescence. In Mus musculus (Mouse), this protein is Vesicle transport through interaction with t-SNAREs homolog 1A (Vti1a).